The following is a 316-amino-acid chain: Putative transketolase C-terminal section (316 aa).

The protein belongs to the transketolase family. Thiamine diphosphate serves as cofactor.

It carries out the reaction D-sedoheptulose 7-phosphate + D-glyceraldehyde 3-phosphate = aldehydo-D-ribose 5-phosphate + D-xylulose 5-phosphate. The chain is Putative transketolase C-terminal section from Methanocaldococcus jannaschii (strain ATCC 43067 / DSM 2661 / JAL-1 / JCM 10045 / NBRC 100440) (Methanococcus jannaschii).